Reading from the N-terminus, the 173-residue chain is T-cell surface glycoprotein CD3 delta chain (173 aa).

The first 21 residues, 1–21, serve as a signal peptide directing secretion; it reads MEHSGILASLILIAVLPQGSP. The Extracellular segment spans residues 22 to 105; that stretch reads FKIQVTEYED…CVELDSGTMA (84 aa). A disulfide bridge links Cys37 with Cys73. 3 N-linked (GlcNAc...) asparagine glycosylation sites follow: Asn38, Asn55, and Asn74. Residues 106–126 form a helical membrane-spanning segment; that stretch reads GVIFIDLIATLLLALGVYCFA. Residues 127–173 lie on the Cytoplasmic side of the membrane; that stretch reads GHETGRPSGAAEVQALLKNEQLYQPLRDREDTQYSRLGGNWPRNKKS. Residues 138–166 enclose the ITAM domain; that stretch reads EVQALLKNEQLYQPLRDREDTQYSRLGGN. Residues Tyr149 and Tyr160 each carry the phosphotyrosine modification.

As to quaternary structure, the TCR-CD3 complex is composed of a CD3D/CD3E and a CD3G/CD3E heterodimers that preferentially associate with TCRalpha and TCRbeta, respectively, to form TCRalpha/CD3E/CD3G and TCRbeta/CD3G/CD3E trimers. In turn, the hexamer interacts with CD3Z homodimer to form the TCR-CD3 complex. Alternatively, TCRalpha and TCRbeta can be replaced by TCRgamma and TCRdelta. Interacts with coreceptors CD4 and CD8. Post-translationally, phosphorylated on Tyr residues after T-cell receptor triggering by LCK in association with CD4/CD8.

The protein localises to the membrane. In terms of biological role, part of the TCR-CD3 complex present on T-lymphocyte cell surface that plays an essential role in adaptive immune response. When antigen presenting cells (APCs) activate T-cell receptor (TCR), TCR-mediated signals are transmitted across the cell membrane by the CD3 chains CD3D, CD3E, CD3G and CD3Z. All CD3 chains contain immunoreceptor tyrosine-based activation motifs (ITAMs) in their cytoplasmic domain. Upon TCR engagement, these motifs become phosphorylated by Src family protein tyrosine kinases LCK and FYN, resulting in the activation of downstream signaling pathways. In addition of this role of signal transduction in T-cell activation, CD3D plays an essential role in thymocyte differentiation. Indeed, participates in correct intracellular TCR-CD3 complex assembly and surface expression. In absence of a functional TCR-CD3 complex, thymocytes are unable to differentiate properly. Interacts with CD4 and CD8 and thus serves to establish a functional link between the TCR and coreceptors CD4 and CD8, which is needed for activation and positive selection of CD4 or CD8 T-cells. In Mus musculus (Mouse), this protein is T-cell surface glycoprotein CD3 delta chain (Cd3d).